The primary structure comprises 613 residues: Protein starmaker (613 aa).

A signal peptide spans 1-20 (MLSRTVFVPLILAFVGVSIS). The interval 42–613 (FTVQFNVGTP…DGRKTSMPIS (572 aa)) is disordered. 5 stretches are compositionally biased toward basic and acidic residues: residues 62–72 (DGKDSAEKNEA), 117–132 (SAEK…DKPD), 147–193 (DASH…KPEG), 206–284 (SAEK…KSDD), and 291–449 (DEQK…HSDS). The segment covering 450–465 (DSDSDSDSDSDSDSDS) has biased composition (acidic residues). 3 stretches are compositionally biased toward basic and acidic residues: residues 467–482 (SNSR…SSES), 509–521 (DKDS…KTDS), and 538–554 (DDSK…TAEK). Over residues 555–573 (TDEDSHDVSDDDDDIDAHD) the composition is skewed to acidic residues. Over residues 574-607 (DEAGVEHGTDEASKPHQEPDHHDDTTHGSDDGRK) the composition is skewed to basic and acidic residues.

Its subcellular location is the secreted. In terms of biological role, essential for the formation of otoliths in the inner ear of developing larvae and for the perception of gravity and acceleration. May be one of the organic components of the ortholiths. The polypeptide is Protein starmaker (stm) (Danio rerio (Zebrafish)).